Here is a 589-residue protein sequence, read N- to C-terminus: Cell fusion protein aff-1 (589 aa).

A signal peptide spans 1–20; it reads MRLWQWSIAVAICLVMVTEA. The Extracellular portion of the chain corresponds to 21-537; the sequence is RLRRHHRKRR…MAHGGDFTEW (517 aa). N-linked (GlcNAc...) asparagine glycans are attached at residues N58, N138, N205, N335, N382, N392, and N408. A helical transmembrane segment spans residues 538 to 558; that stretch reads LKIGIHIVIAVGLLLLLILLF. At 559–589 the chain is on the cytoplasmic side; the sequence is TKCLVPLACCSLSIPFKNRNKKKKKKNSSDY.

It belongs to the EFF/AFF cell fusogen family. In terms of tissue distribution, expressed in amphid sheath cells.

It is found in the cell membrane. The protein resides in the apical cell membrane. Functionally, required for cell fusion events during development including the fusion of anchor cells (AC), vulval A and vulval D rings, and late epidermal seam cells. Required for amphid sheath cell fusion induced by entry into dauer stage. This Caenorhabditis elegans protein is Cell fusion protein aff-1.